The chain runs to 458 residues: 5-hydroxytryptamine receptor 2C (458 aa).

A signal peptide spans 1–32; that stretch reads MVNLRNAVHSFLVHLIGLLVWQCDISVSPVAA. Over 33–55 the chain is Extracellular; that stretch reads IVTDIFNTSDGGRFKFPDGVQNW. A helical membrane pass occupies residues 56–80; that stretch reads PALSIVVIIIMTIGGNILVIMAVSM. Residues 81-86 lie on the Cytoplasmic side of the membrane; it reads EKKLHN. The chain crosses the membrane as a helical span at residues 87–111; the sequence is ATNYFLMSLAIADMLVGLLVMPLSL. Residues 112–128 lie on the Extracellular side of the membrane; that stretch reads LAILYDYVWPLPRYLCP. Cysteine 127 and cysteine 207 are oxidised to a cystine. Residues 129-151 traverse the membrane as a helical segment; it reads VWISLDVLFSTASIMHLCAISLD. Threonine 139 lines the ergotamine pocket. Residues 151 to 153 carry the DRY motif; important for ligand-induced conformation changes motif; the sequence is DRY. Residues 152–167 are Cytoplasmic-facing; that stretch reads RYVAIRNPIEHSRFNS. The helical transmembrane segment at 168–189 threads the bilayer; sequence RTKAIMKIAIVWAISIGVSVPI. Over 190-213 the chain is Extracellular; it reads PVIGLRDERKVFVNNTTCVLNDPN. Leucine 209 provides a ligand contact to ergotamine. A helical transmembrane segment spans residues 214-236; sequence FVLIGSFVAFFIPLTIMVITYCL. The Cytoplasmic segment spans residues 237–311; it reads TIYVLRRQAL…AINNERKASK (75 aa). A disordered region spans residues 274 to 301; that stretch reads EENSANPNQDQNARRRKKKERRPRGTMQ. Positions 287-297 are enriched in basic residues; it reads RRRKKKERRPR. Residues 312-336 form a helical membrane-spanning segment; the sequence is VLGIVFFVFLIMWCPFFITNILSVL. Cysteine 337 and cysteine 341 are disulfide-bonded. Over 337-347 the chain is Extracellular; it reads CEKSCNQKLME. The chain crosses the membrane as a helical span at residues 348 to 370; sequence KLLNVFVWIGYVCSGINPLVYTL. The short motif at 364 to 368 is the NPxxY motif; important for ligand-induced conformation changes and signaling element; sequence NPLVY. At 371–458 the chain is on the cytoplasmic side; sequence FNKIYRRAFS…SVVSERISSV (88 aa). A PDZ-binding motif is present at residues 456 to 458; that stretch reads SSV.

This sequence belongs to the G-protein coupled receptor 1 family. Interacts with MPDZ. Interacts with ARRB2. Interacts with MPP3; this interaction stabilizes the receptor at the plasma membrane and prevents the desensitization of the HTR2C receptor-mediated calcium response.

It localises to the cell membrane. In terms of biological role, G-protein coupled receptor for 5-hydroxytryptamine (serotonin). Also functions as a receptor for various drugs and psychoactive substances, including ergot alkaloid derivatives, 1-2,5,-dimethoxy-4-iodophenyl-2-aminopropane (DOI) and lysergic acid diethylamide (LSD). Ligand binding causes a conformation change that triggers signaling via guanine nucleotide-binding proteins (G proteins) and modulates the activity of downstream effectors. HTR2C is coupled to G(q)/G(11) G alpha proteins and activates phospholipase C-beta, releasing diacylglycerol (DAG) and inositol 1,4,5-trisphosphate (IP3) second messengers that modulate the activity of phosphatidylinositol 3-kinase and promote the release of Ca(2+) ions from intracellular stores, respectively. Beta-arrestin family members inhibit signaling via G proteins and mediate activation of alternative signaling pathways. Regulates neuronal activity via the activation of short transient receptor potential calcium channels in the brain, and thereby modulates the activation of pro-opiomelanocortin neurons and the release of CRH that then regulates the release of corticosterone. Plays a role in the regulation of appetite and eating behavior, responses to anxiogenic stimuli and stress. Plays a role in insulin sensitivity and glucose homeostasis. The protein is 5-hydroxytryptamine receptor 2C of Pan troglodytes (Chimpanzee).